Reading from the N-terminus, the 104-residue chain is N(4)-acetylcytidine amidohydrolase (104 aa).

Positions isoleucine 6–glutamine 94 constitute an ASCH domain. Catalysis depends on lysine 21, which acts as the Proton acceptor. Threonine 24 acts as the Nucleophile in catalysis. Glutamate 74 acts as the Proton donor in catalysis.

Belongs to the N(4)-acetylcytidine amidohydrolase family.

The enzyme catalyses N(4)-acetylcytidine + H2O = cytidine + acetate + H(+). It catalyses the reaction N(4)-acetyl-2'-deoxycytidine + H2O = 2'-deoxycytidine + acetate + H(+). The catalysed reaction is N(4)-acetylcytosine + H2O = cytosine + acetate + H(+). Functionally, catalyzes the hydrolysis of N(4)-acetylcytidine (ac4C). This chain is N(4)-acetylcytidine amidohydrolase (yqfB), found in Salmonella agona (strain SL483).